A 294-amino-acid chain; its full sequence is 33 kDa chaperonin (294 aa).

Intrachain disulfides connect Cys-238–Cys-240 and Cys-271–Cys-274.

It belongs to the HSP33 family. In terms of processing, under oxidizing conditions two disulfide bonds are formed involving the reactive cysteines. Under reducing conditions zinc is bound to the reactive cysteines and the protein is inactive.

Its subcellular location is the cytoplasm. Redox regulated molecular chaperone. Protects both thermally unfolding and oxidatively damaged proteins from irreversible aggregation. Plays an important role in the bacterial defense system toward oxidative stress. The protein is 33 kDa chaperonin of Staphylococcus haemolyticus (strain JCSC1435).